We begin with the raw amino-acid sequence, 108 residues long: Small ribosomal subunit protein eS25B (108 aa).

Over residues 1-20 (MPPKQQLSKAAKAAAALAGG) the composition is skewed to low complexity. Residues 1-30 (MPPKQQLSKAAKAAAALAGGKKSKKKWSKK) form a disordered region. Pro2 bears the N,N-dimethylproline; by NTM1 mark. Over residues 21-30 (KKSKKKWSKK) the composition is skewed to basic residues.

It belongs to the eukaryotic ribosomal protein eS25 family. Component of the small ribosomal subunit (SSU). Mature yeast ribosomes consist of a small (40S) and a large (60S) subunit. The 40S small subunit contains 1 molecule of ribosomal RNA (18S rRNA) and 33 different proteins (encoded by 57 genes). The large 60S subunit contains 3 rRNA molecules (25S, 5.8S and 5S rRNA) and 46 different proteins (encoded by 81 genes).

Its subcellular location is the cytoplasm. In terms of biological role, component of the ribosome, a large ribonucleoprotein complex responsible for the synthesis of proteins in the cell. The small ribosomal subunit (SSU) binds messenger RNAs (mRNAs) and translates the encoded message by selecting cognate aminoacyl-transfer RNA (tRNA) molecules. The large subunit (LSU) contains the ribosomal catalytic site termed the peptidyl transferase center (PTC), which catalyzes the formation of peptide bonds, thereby polymerizing the amino acids delivered by tRNAs into a polypeptide chain. The nascent polypeptides leave the ribosome through a tunnel in the LSU and interact with protein factors that function in enzymatic processing, targeting, and the membrane insertion of nascent chains at the exit of the ribosomal tunnel. The polypeptide is Small ribosomal subunit protein eS25B (Saccharomyces cerevisiae (strain ATCC 204508 / S288c) (Baker's yeast)).